Here is a 1007-residue protein sequence, read N- to C-terminus: Inversin-A (1007 aa).

ANK repeat units follow at residues 9–39 (SLASPVQAAAVTGDKTTLLKLIASSPEVIDQ), 43–72 (LGRTPLMYSVLGDRRSCAEALLKHGAQVNH), 76–105 (SGRTALHLAAQTGNHRLLKLLLSRKADCTH), 109–140 (RDITAVHLSTRHQDTRCLALILKYTPPGQVDA), 144–173 (RKQTALHWSAYYNRPRHVRLLVRHGSNIGI), 177–209 (EGKIPLHWAAGHKDPEAALTVRCLLEAAPTESL), 216–246 (EGRTPLHLAVGDGNQEVVRLLTSYRGCNVAP), 250–279 (LFRTPLHWAALLGYTPIAHLLLETNNSPNI), 284–313 (QGATPLHYAAQGNCPDTVRVLLSHISVRDE), 317–346 (EGRTAFMWAAGKGSDEVVRTMLELDPELEV), 352–381 (YGGTALHAASLSGQITTVRILLENRVQVDA), 385–414 (MKHTALFRACEMGHREVISTLIKGGAKVHL), 418–447 (DGRSPLHWAALGGNANVCQILIENNINPDA), 451–480 (EGRTPLQCAAYGGYIGCMEVLMENKADPNI), 484–513 (NGRTALHWSCNNGYLDAVKLLLGYSAFPNQ), and 519–549 (ERYTPLDYALLGGHQEVIQFMLEHGALSIAA). The D-box 1 signature appears at 486–494 (RTALHWSCN). The IQ 1 domain occupies 551–580 (QDIAASKIQAVYKGHKVRRAFQERKNLLMK). 2 stretches are compositionally biased toward basic and acidic residues: residues 585–599 (RKGAAAKKREGENRQ) and 608–652 (GKQK…HQEE). 2 disordered regions span residues 585–837 (RKGA…KEFS) and 868–893 (SAKSGQRPLTETQSPEKACQGSSALK). The span at 684–701 (IQSSPIEHVHTNSIQTRM) shows a compositional bias: polar residues. A compositionally biased stretch (low complexity) spans 702-712 (SPSRTSISHSS). Polar residues predominate over residues 727 to 745 (NPTQNNTQPRRTSRPQIES). Over residues 751 to 771 (HRIEDLVQKESRRKSHREERK) the composition is skewed to basic and acidic residues. Over residues 772–784 (GSHRQRASSHHRL) the composition is skewed to basic residues. The segment covering 870-893 (KSGQRPLTETQSPEKACQGSSALK) has biased composition (polar residues). A D-box 2 motif is present at residues 964–972 (RKQLFQRKK). One can recognise an IQ 2 domain in the interval 971 to 1000 (KKHAATVIQKAWRTYCIRKSSRKTRHSHLR).

Interacts with apc2. Binds calmodulin.

The protein localises to the cytoplasm. It localises to the cytoskeleton. Functionally, required for normal renal development and establishment of left-right axis. Probably acts as a molecular switch between different Wnt signaling pathways. Inhibits the canonical Wnt pathway by targeting cytoplasmic disheveled for degradation by the ubiquitin-proteasome. This suggests that it is required in renal development to oppose the repression of terminal differentiation of tubular epithelial cells by Wnt signaling. Plays a central role in convergent extension movements in gastrulating embryos, a processus regulated by Wnt signaling. This Xenopus laevis (African clawed frog) protein is Inversin-A (invs-a).